The sequence spans 277 residues: Phosphoribosylaminoimidazole-succinocarboxamide synthase (277 aa).

This sequence belongs to the SAICAR synthetase family.

It carries out the reaction 5-amino-1-(5-phospho-D-ribosyl)imidazole-4-carboxylate + L-aspartate + ATP = (2S)-2-[5-amino-1-(5-phospho-beta-D-ribosyl)imidazole-4-carboxamido]succinate + ADP + phosphate + 2 H(+). The protein operates within purine metabolism; IMP biosynthesis via de novo pathway; 5-amino-1-(5-phospho-D-ribosyl)imidazole-4-carboxamide from 5-amino-1-(5-phospho-D-ribosyl)imidazole-4-carboxylate: step 1/2. The polypeptide is Phosphoribosylaminoimidazole-succinocarboxamide synthase (Salinispora tropica (strain ATCC BAA-916 / DSM 44818 / JCM 13857 / NBRC 105044 / CNB-440)).